Consider the following 119-residue polypeptide: Large ribosomal subunit protein bL17 (119 aa).

This sequence belongs to the bacterial ribosomal protein bL17 family. As to quaternary structure, part of the 50S ribosomal subunit. Contacts protein L32.

This chain is Large ribosomal subunit protein bL17, found in Mesoplasma florum (strain ATCC 33453 / NBRC 100688 / NCTC 11704 / L1) (Acholeplasma florum).